The sequence spans 141 residues: Small ribosomal subunit protein uS8 (141 aa).

It belongs to the universal ribosomal protein uS8 family. Part of the 30S ribosomal subunit. Contacts proteins S5 and S12.

One of the primary rRNA binding proteins, it binds directly to 16S rRNA central domain where it helps coordinate assembly of the platform of the 30S subunit. The protein is Small ribosomal subunit protein uS8 of Mycoplasma genitalium (strain ATCC 33530 / DSM 19775 / NCTC 10195 / G37) (Mycoplasmoides genitalium).